The primary structure comprises 991 residues: Polyribonucleotide nucleotidyltransferase 2, mitochondrial (991 aa).

Residues 1–39 constitute a mitochondrion transit peptide; that stretch reads MSSIVNRASSASLPNFLAWRALGFRTICSGRLGFAPSVP. Positions 609 to 667 constitute a KH domain; the sequence is PRLATLKYSNDSLRTLIGPMGVLKRKIEVETGARLSIDNGTLTIVAKNQDVMEKAQEQV. The 69-residue stretch at 678–746 folds into the S1 motif 1 domain; that stretch reads GGVYKGTVSS…VRGNIKLSRK (69 aa). The disordered stretch occupies residues 813 to 865; the sequence is EAEKSSPVNDNDKPRRAATSKPDRKPKSTASKLIATQKEEEALESIAPEETSA. Residues 822 to 838 show a composition bias toward basic and acidic residues; the sequence is DNDKPRRAATSKPDRKP. One can recognise an S1 motif 2 domain in the interval 925-987; sequence GTEMTATVDH…GVPVMALVDE (63 aa).

It belongs to the polyribonucleotide nucleotidyltransferase family.

Its subcellular location is the mitochondrion. It carries out the reaction RNA(n+1) + phosphate = RNA(n) + a ribonucleoside 5'-diphosphate. Involved in the 3'-end maturation of mitochondrial mRNAs, rRNAs and tRNAs. Functions as a poly(A) mRNA 3'-5' degrading phosphorylase and is required for the degradation of highly expressed transcripts of non-coding regions. The chain is Polyribonucleotide nucleotidyltransferase 2, mitochondrial (PNP2) from Arabidopsis thaliana (Mouse-ear cress).